The primary structure comprises 62 residues: Large ribosomal subunit protein bL28 (62 aa).

This sequence belongs to the bacterial ribosomal protein bL28 family.

The protein is Large ribosomal subunit protein bL28 of Aster yellows witches'-broom phytoplasma (strain AYWB).